The following is a 94-amino-acid chain: Pyrimidine/purine nucleoside phosphorylase (94 aa).

The protein belongs to the nucleoside phosphorylase PpnP family.

It catalyses the reaction a purine D-ribonucleoside + phosphate = a purine nucleobase + alpha-D-ribose 1-phosphate. The enzyme catalyses adenosine + phosphate = alpha-D-ribose 1-phosphate + adenine. The catalysed reaction is cytidine + phosphate = cytosine + alpha-D-ribose 1-phosphate. It carries out the reaction guanosine + phosphate = alpha-D-ribose 1-phosphate + guanine. It catalyses the reaction inosine + phosphate = alpha-D-ribose 1-phosphate + hypoxanthine. The enzyme catalyses thymidine + phosphate = 2-deoxy-alpha-D-ribose 1-phosphate + thymine. The catalysed reaction is uridine + phosphate = alpha-D-ribose 1-phosphate + uracil. It carries out the reaction xanthosine + phosphate = alpha-D-ribose 1-phosphate + xanthine. Catalyzes the phosphorolysis of diverse nucleosides, yielding D-ribose 1-phosphate and the respective free bases. Can use uridine, adenosine, guanosine, cytidine, thymidine, inosine and xanthosine as substrates. Also catalyzes the reverse reactions. The protein is Pyrimidine/purine nucleoside phosphorylase of Pectobacterium atrosepticum (strain SCRI 1043 / ATCC BAA-672) (Erwinia carotovora subsp. atroseptica).